The primary structure comprises 644 residues: Threonine--tRNA ligase (644 aa).

In terms of domain architecture, TGS spans 1 to 61 (MKVSIEGSVV…TACETLEPVY (61 aa)). The segment at 241 to 532 (DHRKLGTQLD…LTEHFAGAFP (292 aa)) is catalytic. The Zn(2+) site is built by C333, H384, and H509.

The protein belongs to the class-II aminoacyl-tRNA synthetase family. Homodimer. Requires Zn(2+) as cofactor.

Its subcellular location is the cytoplasm. It carries out the reaction tRNA(Thr) + L-threonine + ATP = L-threonyl-tRNA(Thr) + AMP + diphosphate + H(+). Its function is as follows. Catalyzes the attachment of threonine to tRNA(Thr) in a two-step reaction: L-threonine is first activated by ATP to form Thr-AMP and then transferred to the acceptor end of tRNA(Thr). Also edits incorrectly charged L-seryl-tRNA(Thr). The protein is Threonine--tRNA ligase of Oleidesulfovibrio alaskensis (strain ATCC BAA-1058 / DSM 17464 / G20) (Desulfovibrio alaskensis).